An 831-amino-acid polypeptide reads, in one-letter code: Serine/threonine-protein kinase ATG1 (831 aa).

The Protein kinase domain maps to 21-321 (YSVEKEIGKG…FTDFFNNEVV (301 aa)). ATP is bound by residues 27-35 (IGKGSFAVV) and Lys50. The active-site Proton acceptor is Asp168. Composition is skewed to polar residues over residues 360 to 382 (QQES…TGVR) and 405 to 419 (NSQN…ASQK). Residues 360 to 419 (QQESAHIPPTQTDENTSVQTGVRRTSGKERLATNHPPHQQIHPEDNSQNPEQSYQSASQK) are disordered.

It belongs to the protein kinase superfamily. Ser/Thr protein kinase family. APG1/unc-51/ULK1 subfamily. Homodimer. Forms a ternary complex with ATG13 and ATG17.

Its subcellular location is the cytoplasm. It localises to the preautophagosomal structure membrane. The catalysed reaction is L-seryl-[protein] + ATP = O-phospho-L-seryl-[protein] + ADP + H(+). It carries out the reaction L-threonyl-[protein] + ATP = O-phospho-L-threonyl-[protein] + ADP + H(+). Functionally, serine/threonine protein kinase involved in the cytoplasm to vacuole transport (Cvt) and found to be essential in autophagy, where it is required for the formation of autophagosomes. Involved in the clearance of protein aggregates which cannot be efficiently cleared by the proteasome. Required for selective autophagic degradation of the nucleus (nucleophagy) as well as for mitophagy which contributes to regulate mitochondrial quantity and quality by eliminating the mitochondria to a basal level to fulfill cellular energy requirements and preventing excess ROS production. Also involved in endoplasmic reticulum-specific autophagic process, in selective removal of ER-associated degradation (ERAD) substrates. Plays a key role in ATG9 and ATG23 cycling through the pre-autophagosomal structure and is necessary to promote ATG18 binding to ATG9 through phosphorylation of ATG9. Catalyzes phosphorylation of ATG4, decreasing the interaction between ATG4 and ATG8 and impairing deconjugation of PE-conjugated forms of ATG8. This chain is Serine/threonine-protein kinase ATG1, found in Kluyveromyces lactis (strain ATCC 8585 / CBS 2359 / DSM 70799 / NBRC 1267 / NRRL Y-1140 / WM37) (Yeast).